An 89-amino-acid chain; its full sequence is Small ribosomal subunit protein uS15 (89 aa).

This sequence belongs to the universal ribosomal protein uS15 family. Part of the 30S ribosomal subunit. Forms a bridge to the 50S subunit in the 70S ribosome, contacting the 23S rRNA.

One of the primary rRNA binding proteins, it binds directly to 16S rRNA where it helps nucleate assembly of the platform of the 30S subunit by binding and bridging several RNA helices of the 16S rRNA. In terms of biological role, forms an intersubunit bridge (bridge B4) with the 23S rRNA of the 50S subunit in the ribosome. This chain is Small ribosomal subunit protein uS15, found in Shewanella woodyi (strain ATCC 51908 / MS32).